The following is a 474-amino-acid chain: Eukaryotic translation initiation factor 3 subunit L (474 aa).

The 195-residue stretch at 255-449 (DAIRMFSHIL…DLDYALQGDL (195 aa)) folds into the PCI domain.

It belongs to the eIF-3 subunit L family. As to quaternary structure, component of the eukaryotic translation initiation factor 3 (eIF-3) complex.

The protein localises to the cytoplasm. In terms of biological role, component of the eukaryotic translation initiation factor 3 (eIF-3) complex, which is involved in protein synthesis of a specialized repertoire of mRNAs and, together with other initiation factors, stimulates binding of mRNA and methionyl-tRNAi to the 40S ribosome. The eIF-3 complex specifically targets and initiates translation of a subset of mRNAs involved in cell proliferation. The chain is Eukaryotic translation initiation factor 3 subunit L from Chaetomium globosum (strain ATCC 6205 / CBS 148.51 / DSM 1962 / NBRC 6347 / NRRL 1970) (Soil fungus).